The primary structure comprises 754 residues: uncharacterized protein (754 aa).

Residues 1 to 110 (MNKGQNQVVP…RNMLGSLQKT (110 aa)) are disordered. Polar residues predominate over residues 15 to 25 (FGGQNPPQLSS). Over residues 26 to 35 (IPPIVNPVVV) the composition is skewed to low complexity. A compositionally biased stretch (polar residues) spans 36-46 (QNRTSPGTPFI). Positions 49–60 (KAKEIYNRRQQE) are enriched in basic and acidic residues. Residues 62-72 (ISSDSEEEESP) show a composition bias toward acidic residues. Positions 76 to 93 (AKSKYSRDSRDSRDTRDS) are enriched in basic and acidic residues.

Its subcellular location is the virion. This is an uncharacterized protein from Acanthamoeba polyphaga mimivirus (APMV).